A 512-amino-acid polypeptide reads, in one-letter code: Tyrosine decarboxylase (512 aa).

Residues Pro100, His205, and His320 each coordinate L-tyrosine. At Lys321 the chain carries N6-(pyridoxal phosphate)lysine. Tyr350 provides a ligand contact to L-tyrosine.

This sequence belongs to the group II decarboxylase family. As to quaternary structure, homodimer. Pyridoxal 5'-phosphate is required as a cofactor. Mainly expressed in roots, stems and capsule walls.

The enzyme catalyses L-tyrosine + H(+) = tyramine + CO2. Functionally, tyrosine decarboxylase that converts tyrosine into tyramine, a precursor of isoquinoline alkaloids and various amides. The polypeptide is Tyrosine decarboxylase (Papaver somniferum (Opium poppy)).